The sequence spans 224 residues: UPF0758 protein VSAL_I0192 (224 aa).

The MPN domain maps to 102–224; that stretch reads ALTSPEHTKR…IVSFAERGWI (123 aa). 3 residues coordinate Zn(2+): H173, H175, and D186. Positions 173 to 186 match the JAMM motif motif; that stretch reads HNHPSGVAEPSQAD.

Belongs to the UPF0758 family.

This chain is UPF0758 protein VSAL_I0192, found in Aliivibrio salmonicida (strain LFI1238) (Vibrio salmonicida (strain LFI1238)).